A 465-amino-acid chain; its full sequence is Glutamate--tRNA ligase 2 (465 aa).

The 'HIGH' region signature appears at 8 to 18 (PSPTGLMHLGN). The 'KMSKS' region motif lies at 249-253 (PLSKR). Lysine 252 contributes to the ATP binding site.

It belongs to the class-I aminoacyl-tRNA synthetase family. Glutamate--tRNA ligase type 1 subfamily. As to quaternary structure, monomer.

It is found in the cytoplasm. It carries out the reaction tRNA(Glu) + L-glutamate + ATP = L-glutamyl-tRNA(Glu) + AMP + diphosphate. Catalyzes the attachment of glutamate to tRNA(Glu) in a two-step reaction: glutamate is first activated by ATP to form Glu-AMP and then transferred to the acceptor end of tRNA(Glu). In Coxiella burnetii (strain RSA 331 / Henzerling II), this protein is Glutamate--tRNA ligase 2.